A 429-amino-acid polypeptide reads, in one-letter code: Tol-Pal system protein TolB (429 aa).

An N-terminal signal peptide occupies residues 1–21; that stretch reads MKPVFKMLLSLLILWTSLLHA.

The protein belongs to the TolB family. As to quaternary structure, the Tol-Pal system is composed of five core proteins: the inner membrane proteins TolA, TolQ and TolR, the periplasmic protein TolB and the outer membrane protein Pal. They form a network linking the inner and outer membranes and the peptidoglycan layer.

The protein resides in the periplasm. In terms of biological role, part of the Tol-Pal system, which plays a role in outer membrane invagination during cell division and is important for maintaining outer membrane integrity. TolB occupies a key intermediary position in the Tol-Pal system because it communicates directly with both membrane-embedded components, Pal in the outer membrane and TolA in the inner membrane. This is Tol-Pal system protein TolB from Hamiltonella defensa subsp. Acyrthosiphon pisum (strain 5AT).